Consider the following 336-residue polypeptide: Potassium channel subfamily K member 1 (336 aa).

The Cytoplasmic segment spans residues 1-20; sequence MLQSLAGSSCVRLVERHRSA. A helical transmembrane segment spans residues 21–41; the sequence is WCFGFLVLGYLLYLVFGAVVF. Residues 42-103 lie on the Extracellular side of the membrane; that stretch reads SSVELPYEDL…SNASGNWNWD (62 aa). The N-linked (GlcNAc...) asparagine glycan is linked to asparagine 95. Residues 104 to 116 constitute an intramembrane region (helical); that stretch reads FTSALFFASTVLS. The stretch at 117–122 is an intramembrane region; sequence TTGYGH. Positions 117 to 122 are selectivity filter 1; that stretch reads TTGYGH. The Extracellular portion of the chain corresponds to 123–132; sequence TVPLSDGGKA. The chain crosses the membrane as a helical span at residues 133-156; it reads FCIIYSVIGIPFTLLFLTAVVQRV. Topologically, residues 157-181 are cytoplasmic; that stretch reads TVHVTRRPVLYFHIRWGFSKQVVAI. Residues 182–202 traverse the membrane as a helical segment; it reads VHAVLLGFVTVSCFFFIPAAV. At 203–211 the chain is on the extracellular side; that stretch reads FSVLEDDWN. Positions 212–224 form an intramembrane region, helical; that stretch reads FLESFYFCFISLS. The segment at 225 to 230 is selectivity filter 2; the sequence is TIGLGD. An intramembrane segment occupies 225-231; sequence TIGLGDY. The Extracellular portion of the chain corresponds to 232-243; sequence VPGEGYNQKFRE. A helical membrane pass occupies residues 244-267; sequence LYKIGITCYLLLGLIAMLVVLETF. Topologically, residues 268–336 are cytoplasmic; sequence CELHELKKFR…PPYEDGSANH (69 aa). Residue lysine 274 forms a Glycyl lysine isopeptide (Lys-Gly) (interchain with G-Cter in SUMO) linkage. Positions 293–299 are important for intracellular retention in recycling endosomes; sequence IMEHDQL. Residues 310–336 form a disordered region; that stretch reads GLKEEQKQNEPFVASQSPPYEDGSANH. Serine 326 is subject to Phosphoserine.

The protein belongs to the two pore domain potassium channel (TC 1.A.1.8) family. As to quaternary structure, homodimer; disulfide-linked. Heterodimer with KCNK2; disulfide-linked. In astrocytes, forms mostly heterodimeric potassium channels with KCNK2, with only a minor proportion of functional channels containing homodimeric KCNK1. Interacts with KCNK3 and KCNK9, forming functional heterodimeric channels. Interacts with GNG4. Identified in a complex with PSD and ARF6; interacts only with PSD that is bound to ARF6. Interacts with UBE2I. Sumoylation is controversial. Sumoylated by UBE2I. Not sumoylated when expressed in xenopus oocytes or mammalian cells. Sumoylation inactivates the channel, but does not interfere with expression at the cell membrane. Sumoylation of a single subunit is sufficient to silence the dimeric channel. Sumoylation of KCNK1 is sufficient to silence heterodimeric channels formed by KCNK1 and KCNK3 or KCNK9. Desumoylated by SENP1; this activates the channel. Desumoylated by SENP1; this strongly increases halothane-mediated activation of heterodimeric channels formed with KCNK9. SENP1 treatment has no effect. Detected in brain and in kidney cortex and medulla, especially at the renal brush border membranes of the proximal convoluted tubules, in distal tubules and on intercalated cells of the collecting duct. Detected in cerebellum granule neurons. Detected in astrocytes in hippocampus stratum radiatum. Highly expressed in the stria vascularis in the cochlea. Detected in neurons in Scarpa's ganglion in the inner ear, at nerve terminals in the crista ampullaris, in supporting cells and dark cells, but not in hair cells (at protein level). Detected in the brain cerebellar granule cell layer, amygdala, thalamus reticular nucleus, habenula, mesencephalic trigeminal neurons, neocortex and piriform cortex, and at lower levels in the olfactory bulb. Detected in Scarpa's ganglia and crista ampullaris in the inner ear.

The protein localises to the cell membrane. Its subcellular location is the recycling endosome. The protein resides in the apical cell membrane. It localises to the cytoplasmic vesicle. It is found in the perikaryon. The protein localises to the cell projection. Its subcellular location is the dendrite. The protein resides in the synaptic cell membrane. It carries out the reaction K(+)(in) = K(+)(out). The catalysed reaction is NH4(+)(in) = NH4(+)(out). It catalyses the reaction Na(+)(in) = Na(+)(out). The enzyme catalyses Rb(+)(in) = Rb(+)(out). It carries out the reaction Cs(+)(in) = Cs(+)(out). The catalysed reaction is Li(+)(in) = Li(+)(out). It catalyses the reaction L-glutamate(out) = L-glutamate(in). The enzyme catalyses chloride(in) = chloride(out). With respect to regulation, inhibited by 100 uM quinine. Slightly inhibited by Ba(+). Activity is first increased and then decreased when the extracellular pH is lowered to 6.0. In terms of biological role, ion channel that contributes to passive transmembrane potassium transport and to the regulation of the resting membrane potential in brain astrocytes, but also in kidney and in other tissues. Forms dimeric channels through which potassium ions pass in accordance with their electrochemical gradient. The channel is selective for K(+) ions at physiological potassium concentrations and at neutral pH, but becomes permeable to Na(+) at subphysiological K(+) levels and upon acidification of the extracellular medium. The homodimer has very low potassium channel activity, when expressed in heterologous systems, and can function as weakly inward rectifying potassium channel. Channel activity is modulated by activation of serotonin receptors. Heterodimeric channels containing KCNK1 and KCNK2 have much higher activity, and may represent the predominant form in astrocytes. Heterodimeric channels containing KCNK1 and KCNK3 or KCNK9 have much higher activity. Heterodimeric channels formed by KCNK1 and KCNK9 may contribute to halothane-sensitive currents. Mediates outward rectifying potassium currents in dentate gyrus granule cells and contributes to the regulation of their resting membrane potential. Contributes to the regulation of action potential firing in dentate gyrus granule cells and down-regulates their intrinsic excitability. Contributes to the regulation of the resting membrane potential of pancreatic beta cells. In astrocytes, the heterodimer formed by KCNK1 and KCNK2 is required for rapid glutamate release in response to activation of G-protein coupled receptors, such as F2R and CNR1. Required for normal ion and water transport in the kidney. The low channel activity of homodimeric KCNK1 may be due to sumoylation. The low channel activity may be due to rapid internalization from the cell membrane and retention in recycling endosomes. Permeable to monovalent cations with ion selectivity for K(+) &gt; Rb(+) &gt;&gt; NH4(+) &gt;&gt; Cs(+) = Na(+) = Li(+). The chain is Potassium channel subfamily K member 1 from Rattus norvegicus (Rat).